The following is a 606-amino-acid chain: MLHTAISCWQPFLGLAVVLIFMGSTIGCPARCECSAQNKSVSCHRRRLIAIPEGIPIETKILDLSKNRLKSVNPEEFISYPLLEEIDLSDNIIANVEPGAFNNLFNLRSLRLKGNRLKLVPLGVFTGLSNLTKLDISENKIVILLDYMFQDLHNLKSLEVGDNDLVYISHRAFSGLLSLEQLTLEKCNLTAVPTEALSHLRSLISLHLKHLNINNMPVYAFKRLFHLKHLEIDYWPLLDMMPANSLYGLNLTSLSVTNTNLSTVPFLAFKHLVYLTHLNLSYNPISTIEAGMFSDLIRLQELHIVGAQLRTIEPHSFQGLRFLRVLNVSQNLLETLEENVFSSPRALEVLSINNNPLACDCRLLWILQRQPTLQFGGQQPMCAGPDTIRERSFKDFHSTALSFYFTCKKPKIREKKLQHLLVDEGQTVQLECSADGDPQPVISWVTPRRRFITTKSNGRATVLGDGTLEIRFAQDQDSGMYVCIASNAAGNDTFTASLTVKGFASDRFLYANRTPMYMTDSNDTISNGTNANTFSLDLKTILVSTAMGCFTFLGVVLFCFLLLFVWSRGKGKHKNSIDLEYVPRKNNGAVVEGEVAGPRRFNMKMI.

The N-terminal stretch at 1–27 (MLHTAISCWQPFLGLAVVLIFMGSTIG) is a signal peptide. Residues 28-57 (CPARCECSAQNKSVSCHRRRLIAIPEGIPI) enclose the LRRNT domain. The Extracellular segment spans residues 28-545 (CPARCECSAQ…LDLKTILVST (518 aa)). The N-linked (GlcNAc...) asparagine glycan is linked to N38. LRR repeat units follow at residues 58 to 79 (ETKILDLSKNRLKSVNPEEFIS), 82 to 103 (LLEEIDLSDNIIANVEPGAFNN), 106 to 127 (NLRSLRLKGNRLKLVPLGVFTG), 130 to 151 (NLTKLDISENKIVILLDYMFQD), 154 to 175 (NLKSLEVGDNDLVYISHRAFSG), 178 to 199 (SLEQLTLEKCNLTAVPTEALSH), 202 to 223 (SLISLHLKHLNINNMPVYAFKR), 226 to 247 (HLKHLEIDYWPLLDMMPANSLY), 250 to 271 (NLTSLSVTNTNLSTVPFLAFKH), 274 to 295 (YLTHLNLSYNPISTIEAGMFSD), 298 to 319 (RLQELHIVGAQLRTIEPHSFQG), and 322 to 343 (FLRVLNVSQNLLETLEENVFSS). The N-linked (GlcNAc...) asparagine glycan is linked to N130. N188 carries an N-linked (GlcNAc...) asparagine glycan. N-linked (GlcNAc...) asparagine glycosylation occurs at N279. N-linked (GlcNAc...) asparagine glycosylation is present at N327. In terms of domain architecture, LRRCT spans 355-409 (NPLACDCRLLWILQRQPTLQFGGQQPMCAGPDTIRERSFKDFHSTALSFYFTCKK). The Ig-like C2-type domain occupies 410–499 (PKIREKKLQH…GNDTFTASLT (90 aa)). C432 and C483 are disulfide-bonded. The chain crosses the membrane as a helical span at residues 546 to 566 (AMGCFTFLGVVLFCFLLLFVW). The Cytoplasmic portion of the chain corresponds to 567–606 (SRGKGKHKNSIDLEYVPRKNNGAVVEGEVAGPRRFNMKMI).

Its subcellular location is the membrane. In Homo sapiens (Human), this protein is Leucine-rich repeat and immunoglobulin-like domain-containing nogo receptor-interacting protein 2 (LINGO2).